Reading from the N-terminus, the 297-residue chain is Acetylglutamate kinase (297 aa).

Residues 64-65 (GG), R86, and N190 contribute to the substrate site.

This sequence belongs to the acetylglutamate kinase family. ArgB subfamily.

The protein localises to the cytoplasm. The catalysed reaction is N-acetyl-L-glutamate + ATP = N-acetyl-L-glutamyl 5-phosphate + ADP. It participates in amino-acid biosynthesis; L-arginine biosynthesis; N(2)-acetyl-L-ornithine from L-glutamate: step 2/4. Catalyzes the ATP-dependent phosphorylation of N-acetyl-L-glutamate. The sequence is that of Acetylglutamate kinase from Solidesulfovibrio magneticus (strain ATCC 700980 / DSM 13731 / RS-1) (Desulfovibrio magneticus).